Consider the following 354-residue polypeptide: Serum paraoxonase/arylesterase 2 (354 aa).

Cys42 and Cys352 are oxidised to a cystine. Residues Glu53 and Asp54 each coordinate Ca(2+). His114 functions as the Proton acceptor in the catalytic mechanism. Residues Ile116, Asn167, Asp168, and Asn223 each coordinate Ca(2+). N-linked (GlcNAc...) asparagine glycosylation occurs at Asn254. Ca(2+) contacts are provided by Asp268 and Asn269. N-linked (GlcNAc...) asparagine glycans are attached at residues Asn269 and Asn323.

The protein belongs to the paraoxonase family. As to quaternary structure, homotrimer. It depends on Ca(2+) as a cofactor. Glycosylated. Post-translationally, the signal sequence is not cleaved.

It localises to the membrane. It carries out the reaction a phenyl acetate + H2O = a phenol + acetate + H(+). It catalyses the reaction an N-acyl-L-homoserine lactone + H2O = an N-acyl-L-homoserine + H(+). Functionally, capable of hydrolyzing lactones and a number of aromatic carboxylic acid esters. This is Serum paraoxonase/arylesterase 2 (PON2) from Bos taurus (Bovine).